Here is a 547-residue protein sequence, read N- to C-terminus: Chaperonin GroEL (547 aa).

ATP is bound by residues 30–33 (TLGP), K51, 87–91 (DGTTT), G414, 478–480 (NAA), and D494.

This sequence belongs to the chaperonin (HSP60) family. As to quaternary structure, forms a cylinder of 14 subunits composed of two heptameric rings stacked back-to-back. Interacts with the co-chaperonin GroES.

The protein resides in the cytoplasm. The enzyme catalyses ATP + H2O + a folded polypeptide = ADP + phosphate + an unfolded polypeptide.. Together with its co-chaperonin GroES, plays an essential role in assisting protein folding. The GroEL-GroES system forms a nano-cage that allows encapsulation of the non-native substrate proteins and provides a physical environment optimized to promote and accelerate protein folding. This Klebsiella pneumoniae protein is Chaperonin GroEL.